We begin with the raw amino-acid sequence, 154 residues long: MATFSQKPAEVVKKWVLIDAEGLVVGRLASLVANRLRGKHKATFTPHVDDGDNVIIINADKVVLTGKKYTDKKYYWHTGHPGGIKERTARQILEGRFPERVLEKAIERMIPRGPLGRRQMKNLRVNVGPNHQHEAQQPEVLDVAALNRKNKGNA.

The protein belongs to the universal ribosomal protein uL13 family. In terms of assembly, part of the 50S ribosomal subunit.

In terms of biological role, this protein is one of the early assembly proteins of the 50S ribosomal subunit, although it is not seen to bind rRNA by itself. It is important during the early stages of 50S assembly. This chain is Large ribosomal subunit protein uL13, found in Brucella melitensis biotype 2 (strain ATCC 23457).